The sequence spans 334 residues: ADP-L-glycero-D-manno-heptose-6-epimerase (334 aa).

NADP(+) contacts are provided by residues 11–12 (FI), 32–33 (DN), Lys-39, Lys-54, 77–81 (QGACS), and Asn-94. Tyr-141 functions as the Proton acceptor in the catalytic mechanism. Residue Lys-145 coordinates NADP(+). Asn-171 is a binding site for substrate. NADP(+)-binding residues include Val-172 and Lys-180. Residue Lys-180 is the Proton acceptor of the active site. Residues Arg-182, His-189, 203–206 (FGSN), Arg-216, and Tyr-295 each bind substrate.

This sequence belongs to the NAD(P)-dependent epimerase/dehydratase family. HldD subfamily. Homopentamer. Requires NADP(+) as cofactor.

The enzyme catalyses ADP-D-glycero-beta-D-manno-heptose = ADP-L-glycero-beta-D-manno-heptose. The protein operates within nucleotide-sugar biosynthesis; ADP-L-glycero-beta-D-manno-heptose biosynthesis; ADP-L-glycero-beta-D-manno-heptose from D-glycero-beta-D-manno-heptose 7-phosphate: step 4/4. Functionally, catalyzes the interconversion between ADP-D-glycero-beta-D-manno-heptose and ADP-L-glycero-beta-D-manno-heptose via an epimerization at carbon 6 of the heptose. The protein is ADP-L-glycero-D-manno-heptose-6-epimerase of Neisseria meningitidis serogroup C / serotype 2a (strain ATCC 700532 / DSM 15464 / FAM18).